An 86-amino-acid chain; its full sequence is MRLDKFLKVSRLIKRRTLAKEVADQGRISINGNQAKASSDVKPGDELTVRFGQKLVTVQVNELKDTTKKEEAANMYTILKEEKLGE.

Residues 1 to 62 form the S4 RNA-binding domain; it reads MRLDKFLKVS…QKLVTVQVNE (62 aa).

This sequence belongs to the RqcP family. Associates with stalled 50S ribosomal subunits. Binds to RqcH, 23S rRNA and the P-site tRNA. Does not require RqcH for association with 50S subunits. Crystallized 50S subunits are variously associated with an A/P-site tRNA with or without RqcH, as well as with P- and E-site tRNAs but no RqcH. Displaced from the 50S subunit by puromycin but not thiostrepton.

In terms of biological role, key component of the ribosome quality control system (RQC), a ribosome-associated complex that mediates the extraction of incompletely synthesized nascent chains from stalled ribosomes and their subsequent degradation. RqcH recruits Ala-charged tRNA, and with RqcP directs the elongation of stalled nascent chains on 50S ribosomal subunits, leading to non-templated C-terminal alanine extensions (Ala tail). The Ala tail promotes nascent chain degradation. RqcP is associated with the translocation-like movement of the peptidyl-tRNA from the A-site into the P-site. RqcH, RqcP and charged tRNA(Ala) are necessary and sufficient to add an Ala tail to a model stalled nascent peptide; does not add Val. This is RQC P-site tRNA stabilizing factor from Bacillus subtilis (strain 168).